Here is a 408-residue protein sequence, read N- to C-terminus: 1-deoxy-D-xylulose 5-phosphate reductoisomerase (408 aa).

Threonine 27, glycine 28, serine 29, isoleucine 30, alanine 53, arginine 54, asparagine 55, and asparagine 140 together coordinate NADPH. Residue lysine 141 participates in 1-deoxy-D-xylulose 5-phosphate binding. Glutamate 142 contributes to the NADPH binding site. Aspartate 166 lines the Mn(2+) pocket. Positions 167, 168, 192, and 215 each coordinate 1-deoxy-D-xylulose 5-phosphate. Glutamate 168 contacts Mn(2+). Glycine 221 lines the NADPH pocket. The 1-deoxy-D-xylulose 5-phosphate site is built by serine 228, asparagine 233, lysine 234, and glutamate 237. Glutamate 237 serves as a coordination point for Mn(2+).

Belongs to the DXR family. Requires Mg(2+) as cofactor. Mn(2+) serves as cofactor.

It carries out the reaction 2-C-methyl-D-erythritol 4-phosphate + NADP(+) = 1-deoxy-D-xylulose 5-phosphate + NADPH + H(+). The protein operates within isoprenoid biosynthesis; isopentenyl diphosphate biosynthesis via DXP pathway; isopentenyl diphosphate from 1-deoxy-D-xylulose 5-phosphate: step 1/6. Catalyzes the NADPH-dependent rearrangement and reduction of 1-deoxy-D-xylulose-5-phosphate (DXP) to 2-C-methyl-D-erythritol 4-phosphate (MEP). This chain is 1-deoxy-D-xylulose 5-phosphate reductoisomerase, found in Nitratidesulfovibrio vulgaris (strain ATCC 29579 / DSM 644 / CCUG 34227 / NCIMB 8303 / VKM B-1760 / Hildenborough) (Desulfovibrio vulgaris).